Reading from the N-terminus, the 143-residue chain is Large ribosomal subunit protein uL11 (143 aa).

This sequence belongs to the universal ribosomal protein uL11 family. Part of the ribosomal stalk of the 50S ribosomal subunit. Interacts with L10 and the large rRNA to form the base of the stalk. L10 forms an elongated spine to which L12 dimers bind in a sequential fashion forming a multimeric L10(L12)X complex. One or more lysine residues are methylated.

In terms of biological role, forms part of the ribosomal stalk which helps the ribosome interact with GTP-bound translation factors. The polypeptide is Large ribosomal subunit protein uL11 (Dechloromonas aromatica (strain RCB)).